The sequence spans 725 residues: Methionine--tRNA ligase (725 aa).

Positions 27–37 match the 'HIGH' region motif; sequence PYANGQIHIGH. 4 residues coordinate Zn(2+): Cys158, Cys161, Cys171, and Cys174. Residues 348–352 carry the 'KMSKS' region motif; that stretch reads KMSKS. Lys351 contributes to the ATP binding site. A tRNA-binding domain is found at 619-725; sequence DFAKIDLRIA…SGAKPGMRVK (107 aa).

This sequence belongs to the class-I aminoacyl-tRNA synthetase family. MetG type 1 subfamily. In terms of assembly, homodimer. Zn(2+) serves as cofactor.

The protein localises to the cytoplasm. The enzyme catalyses tRNA(Met) + L-methionine + ATP = L-methionyl-tRNA(Met) + AMP + diphosphate. Functionally, is required not only for elongation of protein synthesis but also for the initiation of all mRNA translation through initiator tRNA(fMet) aminoacylation. In Burkholderia pseudomallei (strain 1106a), this protein is Methionine--tRNA ligase.